The chain runs to 100 residues: Small ribosomal subunit protein uS14 (100 aa).

This sequence belongs to the universal ribosomal protein uS14 family. In terms of assembly, part of the 30S ribosomal subunit. Contacts proteins S3 and S10.

In terms of biological role, binds 16S rRNA, required for the assembly of 30S particles and may also be responsible for determining the conformation of the 16S rRNA at the A site. This Prochlorococcus marinus (strain MIT 9313) protein is Small ribosomal subunit protein uS14.